A 152-amino-acid chain; its full sequence is Large-conductance mechanosensitive channel (152 aa).

The next 2 membrane-spanning stretches (helical) occupy residues 14–34 and 81–101; these read VIDLAIGVVIGGAFGKIVTSL and GLFLNNLINFLIIAFSIFIVI.

It belongs to the MscL family. As to quaternary structure, homopentamer.

The protein localises to the cell membrane. Its function is as follows. Channel that opens in response to stretch forces in the membrane lipid bilayer. May participate in the regulation of osmotic pressure changes within the cell. The chain is Large-conductance mechanosensitive channel from Clostridium perfringens (strain ATCC 13124 / DSM 756 / JCM 1290 / NCIMB 6125 / NCTC 8237 / Type A).